The sequence spans 949 residues: General transcription factor II-I repeat domain-containing protein 2B (949 aa).

GTF2I-like repeat units follow at residues 98–192 and 323–417; these read QVHS…QLGG and LSSI…SNVG.

This sequence belongs to the TFII-I family. As to expression, ubiquitous.

Its subcellular location is the nucleus. This chain is General transcription factor II-I repeat domain-containing protein 2B (GTF2IRD2B), found in Homo sapiens (Human).